A 213-amino-acid polypeptide reads, in one-letter code: Cytochrome c biogenesis ATP-binding export protein CcmA (213 aa).

An ABC transporter domain is found at 8–213 (LQATALTCER…RDIDLGQWAA (206 aa)). Residue 40-47 (GPNGSGKT) participates in ATP binding.

It belongs to the ABC transporter superfamily. CcmA exporter (TC 3.A.1.107) family. As to quaternary structure, the complex is composed of two ATP-binding proteins (CcmA) and two transmembrane proteins (CcmB).

It localises to the cell inner membrane. The enzyme catalyses heme b(in) + ATP + H2O = heme b(out) + ADP + phosphate + H(+). Functionally, part of the ABC transporter complex CcmAB involved in the biogenesis of c-type cytochromes; once thought to export heme, this seems not to be the case, but its exact role is uncertain. Responsible for energy coupling to the transport system. This Pseudomonas savastanoi pv. phaseolicola (strain 1448A / Race 6) (Pseudomonas syringae pv. phaseolicola (strain 1448A / Race 6)) protein is Cytochrome c biogenesis ATP-binding export protein CcmA.